The primary structure comprises 651 residues: MVKLAKGAKTQAKPKKAAPPPPKDMEDSEEEEDMEEDDSSDEEVEVPVKKTPAKKTATPAKATPGKAATPGKKGATPAKNGKQAKKQESEEEEDDSDEEAEDQKPIKNKPVAKKAVAKKEESEEDDDDEDESEEEKAVAKKPTPAKKPAGKKQESEEEDDEESEDEPMEVAPALKGKKTAQAAEEDDEEEDDDDEEDDDDEEEQQGSAKRKKEMPKTIPEAKKTKTDTASEGLSIFIGNLNSTKEFDELKDALREFFSKKNLTIQDIRIGNSKKFGYVDFSSEEEVEKALKLTGKKILGTEVKIEKAMAFDKNKTAENKKERDSRTLFVKNIPYSTTVEELQEIFENAKDIRIPTGKDGSNKGIAYVEFSNEDEANKALEEKQGAEIEGRSIFVDFTGEKSQNSGNKKGPEGDSKVLVVNNLSYSATEDSLREVFEKATSIRIPQNQGRAKGFAFIEFSSAEDAKDAMDSCNNTEIEGRSIRLEFSQGGGPQGGGRGGSAQSKTLFVRGLSEDTTEETLKEAFDGSVNARIVTDRDTGASKGFGFVDFSTAEDAKAAKEAMEDGEIDGNKVTLDFAKPKGDSQRGGRGGFGRGGGFRGGRGGRGGGGGRGFGGRGGGRGRGGFGGRGGGGFRGGQGGGFRGGQGKKMRFDD.

Positions 1–11 (MVKLAKGAKTQ) are enriched in low complexity. Positions 1–230 (MVKLAKGAKT…AKKTKTDTAS (230 aa)) are disordered. Over residues 26–45 (EDSEEEEDMEEDDSSDEEVE) the composition is skewed to acidic residues. The span at 54–79 (KKTATPAKATPGKAATPGKKGATPAK) shows a compositional bias: low complexity. Acidic residues predominate over residues 89 to 101 (SEEEEDDSDEEAE). A compositionally biased stretch (basic residues) spans 106–116 (IKNKPVAKKAV). 3 stretches are compositionally biased toward acidic residues: residues 122 to 134 (SEEDDDDEDESEE), 155 to 168 (SEEEDDEESEDEPM), and 183 to 204 (AEEDDEEEDDDDEEDDDDEEEQ). Ser-155 is modified (phosphoserine). Positions 219–228 (PEAKKTKTDT) are enriched in basic and acidic residues. RRM domains are found at residues 233–309 (LSIF…KAMA), 325–399 (RTLF…FTGE), 415–488 (KVLV…FSQG), and 503–578 (KTLF…FAKP). The tract at residues 574–651 (DFAKPKGDSQ…GQGKKMRFDD (78 aa)) is disordered. Residues 585–644 (GGRGGFGRGGGFRGGRGGRGGGGGRGFGGRGGGRGRGGFGGRGGGGFRGGQGGGFRGGQG) are compositionally biased toward gly residues.

It is found in the nucleus. Its subcellular location is the nucleolus. Nucleolin is the major nucleolar protein of growing eukaryotic cells. It is found associated with intranucleolar chromatin and pre-ribosomal particles. It induces chromatin decondensation by binding to histone H1. It is thought to play a role in pre-rRNA transcription and ribosome assembly. The sequence is that of Nucleolin (ncl) from Xenopus laevis (African clawed frog).